Consider the following 204-residue polypeptide: Holliday junction branch migration complex subunit RuvA (204 aa).

The domain I stretch occupies residues 1–64 (MIGRLQGILL…EDAHLLFGFA (64 aa)). The tract at residues 65–143 (QKTDRTLFRE…GVKQSDFFVE (79 aa)) is domain II. Residues 144 to 155 (STHIPLSPSIES) are flexible linker. Residues 156–204 (HSESSSDEAISALIALGYKPVEAEKMVKRVAKPELTSEQVIREALKAAL) form a domain III region.

This sequence belongs to the RuvA family. As to quaternary structure, homotetramer. Forms an RuvA(8)-RuvB(12)-Holliday junction (HJ) complex. HJ DNA is sandwiched between 2 RuvA tetramers; dsDNA enters through RuvA and exits via RuvB. An RuvB hexamer assembles on each DNA strand where it exits the tetramer. Each RuvB hexamer is contacted by two RuvA subunits (via domain III) on 2 adjacent RuvB subunits; this complex drives branch migration. In the full resolvosome a probable DNA-RuvA(4)-RuvB(12)-RuvC(2) complex forms which resolves the HJ.

It is found in the cytoplasm. In terms of biological role, the RuvA-RuvB-RuvC complex processes Holliday junction (HJ) DNA during genetic recombination and DNA repair, while the RuvA-RuvB complex plays an important role in the rescue of blocked DNA replication forks via replication fork reversal (RFR). RuvA specifically binds to HJ cruciform DNA, conferring on it an open structure. The RuvB hexamer acts as an ATP-dependent pump, pulling dsDNA into and through the RuvAB complex. HJ branch migration allows RuvC to scan DNA until it finds its consensus sequence, where it cleaves and resolves the cruciform DNA. This Haemophilus influenzae (strain PittEE) protein is Holliday junction branch migration complex subunit RuvA.